The chain runs to 283 residues: uncharacterized protein (283 aa).

A run of 5 helical transmembrane segments spans residues 8 to 28 (LILSIVGNILLGLIKIIIGYV), 38 to 58 (GIHSLSDVITSIIGIIGVKIA), 73 to 93 (FECLFSFFIGLALFFTAYEIG), 100 to 120 (IIYGEVIEVNAIMVGVAILSI), and 175 to 195 (AIAGIIVALMIAKVAFDICLT).

Belongs to the cation diffusion facilitator (CDF) transporter (TC 2.A.4) family.

It localises to the cell membrane. This is an uncharacterized protein from Methanocaldococcus jannaschii (strain ATCC 43067 / DSM 2661 / JAL-1 / JCM 10045 / NBRC 100440) (Methanococcus jannaschii).